The sequence spans 406 residues: Cysteine desulfurase (406 aa).

Lys226 bears the N6-(pyridoxal phosphate)lysine mark. Residue Cys364 is the Cysteine persulfide intermediate of the active site.

This sequence belongs to the class-V pyridoxal-phosphate-dependent aminotransferase family. Csd subfamily. As to quaternary structure, homodimer. Interacts with SufE and the SufBCD complex composed of SufB, SufC and SufD. The interaction with SufE is required to mediate the direct transfer of the sulfur atom from the S-sulfanylcysteine. Requires pyridoxal 5'-phosphate as cofactor.

It is found in the cytoplasm. It catalyses the reaction (sulfur carrier)-H + L-cysteine = (sulfur carrier)-SH + L-alanine. The enzyme catalyses L-selenocysteine + AH2 = hydrogenselenide + L-alanine + A + H(+). Its pathway is cofactor biosynthesis; iron-sulfur cluster biosynthesis. In terms of biological role, cysteine desulfurases mobilize the sulfur from L-cysteine to yield L-alanine, an essential step in sulfur metabolism for biosynthesis of a variety of sulfur-containing biomolecules. Component of the suf operon, which is activated and required under specific conditions such as oxidative stress and iron limitation. Acts as a potent selenocysteine lyase in vitro, that mobilizes selenium from L-selenocysteine. Selenocysteine lyase activity is however unsure in vivo. The chain is Cysteine desulfurase from Escherichia coli O157:H7 (strain EC4115 / EHEC).